A 439-amino-acid chain; its full sequence is Actin-related protein 3 (439 aa).

The tract at residues Pro40–Leu71 is disordered.

It belongs to the actin family. ARP3 subfamily. In terms of assembly, component of the Arp2/3 complex composed.

The protein resides in the cytoplasm. The protein localises to the cytoskeleton. In terms of biological role, functions as ATP-binding component of the Arp2/3 complex which is involved in regulation of actin polymerization and together with an activating nucleation-promoting factor (NPF) mediates the formation of branched actin networks. Seems to contact the pointed end of the daughter actin filament. The sequence is that of Actin-related protein 3 (arp-3) from Neurospora crassa (strain ATCC 24698 / 74-OR23-1A / CBS 708.71 / DSM 1257 / FGSC 987).